The sequence spans 223 residues: Ribosome maturation factor RimM (223 aa).

The span at M1–P12 shows a compositional bias: low complexity. 2 disordered regions span residues M1–L44 and V203–G223. Residues D135–L210 enclose the PRC barrel domain.

It belongs to the RimM family. As to quaternary structure, binds ribosomal protein uS19.

The protein localises to the cytoplasm. Functionally, an accessory protein needed during the final step in the assembly of 30S ribosomal subunit, possibly for assembly of the head region. Essential for efficient processing of 16S rRNA. May be needed both before and after RbfA during the maturation of 16S rRNA. It has affinity for free ribosomal 30S subunits but not for 70S ribosomes. In Methylorubrum extorquens (strain CM4 / NCIMB 13688) (Methylobacterium extorquens), this protein is Ribosome maturation factor RimM.